Reading from the N-terminus, the 877-residue chain is TSET complex member tstB (877 aa).

Disordered stretches follow at residues 398-437 (HLHH…SGSS) and 522-557 (TGLP…SNSI). 2 stretches are compositionally biased toward low complexity: residues 412 to 437 (GSVP…SGSS) and 529 to 556 (SNNN…SSNS).

As to quaternary structure, component of the TSET complex, a heterohexamer composed of tstA, tstB, tstC, tstD, tstE and tstF, which may act in plasma membrane turnover. tstA, tstB, tstC and tstD are likely to be the core complex members with tstE and tstF acting as associated scaffold proteins.

The sequence is that of TSET complex member tstB from Dictyostelium discoideum (Social amoeba).